A 636-amino-acid chain; its full sequence is LEAF RUST 10 DISEASE-RESISTANCE LOCUS RECEPTOR-LIKE PROTEIN KINASE-like 1.5 (636 aa).

The N-terminal stretch at 1–26 is a signal peptide; that stretch reads MSQPPWRCFSLLIFVLTIFSTKPSSA. At 27-257 the chain is on the extracellular side; it reads STSCSSSFHC…NNKRVNHIAV (231 aa). Residues Asn-73, Asn-102, Asn-146, and Asn-224 are each glycosylated (N-linked (GlcNAc...) asparagine). Residues 258-278 traverse the membrane as a helical segment; sequence LSLIFALTCLLLVFSVAVAIF. Topologically, residues 279–636 are cytoplasmic; that stretch reads RSRRASFLSS…RVADDDVAKN (358 aa). A Protein kinase domain is found at 324 to 628; the sequence is FDPKRKIGDG…LRRIRSHTRV (305 aa). Residues 330–338 and Lys-352 each bind ATP; that span reads IGDGGFGSV. The active-site Proton acceptor is Asp-458.

This sequence belongs to the protein kinase superfamily. Ser/Thr protein kinase family.

Its subcellular location is the cell membrane. The catalysed reaction is L-seryl-[protein] + ATP = O-phospho-L-seryl-[protein] + ADP + H(+). It carries out the reaction L-threonyl-[protein] + ATP = O-phospho-L-threonyl-[protein] + ADP + H(+). The chain is LEAF RUST 10 DISEASE-RESISTANCE LOCUS RECEPTOR-LIKE PROTEIN KINASE-like 1.5 from Arabidopsis thaliana (Mouse-ear cress).